The chain runs to 455 residues: Mycosin-4 (455 aa).

The N-terminal stretch at 1-25 (MTTSRTLRLLVVSALATLSGLGTPV) is a signal peptide. The 311-residue stretch at 74-384 (SAQLADLDQV…NGTVDALAAV (311 aa)) folds into the Peptidase S8 domain. Residues Asp98, His129, and Ser329 each act as charge relay system in the active site. Residues 389–417 (IPQAGTATSDPAPVAVPVPRRSTPGPSDR) form a disordered region. Residues 394-412 (TATSDPAPVAVPVPRRSTP) are compositionally biased toward low complexity. The helical transmembrane segment at 432-452 (LALMATLATASRRLRPGRNGI) threads the bilayer.

The protein belongs to the peptidase S8 family.

The protein localises to the cell membrane. This Mycobacterium tuberculosis (strain ATCC 25618 / H37Rv) protein is Mycosin-4.